The following is a 289-amino-acid chain: Bis(5'-nucleosyl)-tetraphosphatase, symmetrical (289 aa).

The protein belongs to the Ap4A hydrolase family.

The enzyme catalyses P(1),P(4)-bis(5'-adenosyl) tetraphosphate + H2O = 2 ADP + 2 H(+). In terms of biological role, hydrolyzes diadenosine 5',5'''-P1,P4-tetraphosphate to yield ADP. This is Bis(5'-nucleosyl)-tetraphosphatase, symmetrical from Pseudomonas fluorescens (strain ATCC BAA-477 / NRRL B-23932 / Pf-5).